Reading from the N-terminus, the 474-residue chain is PTS system N-acetylmuramic acid-specific EIIBC component (474 aa).

The region spanning 1 to 89 is the PTS EIIB type-1 domain; it reads MAKEISSELL…SELLGEAPVQ (89 aa). Topologically, residues 1–123 are cytoplasmic; the sequence is MAKEISSELL…LAKFATIFTP (123 aa). The active-site Phosphocysteine intermediate; for EIIB activity is Cys-29. Residues 115–474 enclose the PTS EIIC type-1 domain; it reads AKFATIFTPL…LFGCRNVNLD (360 aa). The chain crosses the membrane as a helical span at residues 124 to 144; sequence LIPGFIAAGLLLGIATLIATV. Over 145 to 157 the chain is Periplasmic; it reads MHVPADAQGTLPD. Residues 158 to 178 traverse the membrane as a helical segment; the sequence is ALNFMKVFSKGLFTFLVILVG. Residues 179–180 are Cytoplasmic-facing; that stretch reads YN. A helical transmembrane segment spans residues 181-201; that stretch reads AAQAFGGTGVNGAIIAALFLL. At 202–217 the chain is on the periplasmic side; the sequence is GYNPAATTGYYAGFHD. A helical transmembrane segment spans residues 218–238; that stretch reads FFGLPIDPRGNIIGVLIAAWA. Residues 239–260 are Cytoplasmic-facing; the sequence is CARIEGMVRRFMPDDLDMLLTS. The helical transmembrane segment at 261 to 281 threads the bilayer; it reads LITLLITATLAYLIIMPLGGW. At 282-301 the chain is on the periplasmic side; sequence LFEGMSWLFMHLNSNPLGCA. The helical transmembrane segment at 302–322 threads the bilayer; that stretch reads VLAGLFLIAVVFGVHQGFIPV. Residues 323–334 are Cytoplasmic-facing; the sequence is YLALMDSQGFNS. Residues 335–355 traverse the membrane as a helical segment; the sequence is LFPILSMAGAGQVGAALALYW. Residues 356–368 lie on the Periplasmic side of the membrane; that stretch reads RAQPHSGLRSQVR. A helical transmembrane segment spans residues 369 to 389; that stretch reads GAIIPGLLGVGEPLIYGVTLP. Residues 390-393 are Cytoplasmic-facing; the sequence is RMKP. Residues 394 to 414 form a helical membrane-spanning segment; sequence FITACLGGAAGGLFIGLIAWW. The Periplasmic segment spans residues 415 to 440; it reads GLPMGLNSAFGPSGLVALPLMTSAQG. Residues 441–461 form a helical membrane-spanning segment; it reads ILPAMAIYAGGILVAWVCGFI. Residues 462–474 lie on the Cytoplasmic side of the membrane; the sequence is FTTLFGCRNVNLD.

The protein resides in the cell inner membrane. The catalysed reaction is N-acetyl-beta-D-muramate(out) + N(pros)-phospho-L-histidyl-[protein] = N-acetyl-beta-D-muramate 6-phosphate(in) + L-histidyl-[protein]. In terms of biological role, the phosphoenolpyruvate-dependent sugar phosphotransferase system (sugar PTS), a major carbohydrate active transport system, catalyzes the phosphorylation of incoming sugar substrates concomitantly with their translocation across the cell membrane. This system is involved in N-acetylmuramic acid (MurNAc) transport, yielding cytoplasmic MurNAc-6-P. Is also able to take up anhydro-N-acetylmuramic acid (anhMurNAc), but cannot phosphorylate the carbon 6, probably because of the 1,6-anhydro ring. The chain is PTS system N-acetylmuramic acid-specific EIIBC component (murP) from Shigella dysenteriae serotype 1 (strain Sd197).